A 34-amino-acid polypeptide reads, in one-letter code: Photosystem I reaction center subunit XII (34 aa).

A helical membrane pass occupies residues 9–29 (LIILGLIVVMHAGVLALRLGI).

It belongs to the PsaM family.

The protein localises to the cellular thylakoid membrane. This chain is Photosystem I reaction center subunit XII, found in Prochlorococcus marinus subsp. pastoris (strain CCMP1986 / NIES-2087 / MED4).